A 69-amino-acid chain; its full sequence is Neurotoxin Cex5 (69 aa).

Alanine 1 is a signal peptide. Residues lysine 2–glycine 67 form the LCN-type CS-alpha/beta domain. 4 disulfide bridges follow: cysteine 13–cysteine 66, cysteine 17–cysteine 42, cysteine 26–cysteine 47, and cysteine 30–cysteine 49. Cysteine 66 carries the cysteine amide modification. A propeptide spanning residues glycine 67–lysine 69 is cleaved from the precursor.

The protein belongs to the long (4 C-C) scorpion toxin superfamily. Sodium channel inhibitor family. Beta subfamily. Expressed by the venom gland.

The protein resides in the secreted. In terms of biological role, beta toxins bind voltage-independently at site-4 of sodium channels (Nav) and shift the voltage of activation toward more negative potentials thereby affecting sodium channel activation and promoting spontaneous and repetitive firing. The sequence is that of Neurotoxin Cex5 from Centruroides exilicauda (Bark scorpion).